A 446-amino-acid chain; its full sequence is MSIDTIVAIATPPGRGGVGIVRISGPNAYAIALCLNGNKALQPRLATFCSLYKGNNEVLDQGLVLYFKGPHSFTGEDVIEIQAHGSPVVLDLLIKESIAAGARLARPGEFSERAFLNDKIDLIQAEAIADLIQASSDTAARMALKSLQGDFSKKINQLNEELIYLRMYVEAAIDFPEEEIDFLNDGNVSQLLQKIIGRLEDIRSQANQGVLLREGLSLVIAGRPNAGKSTLINNLAGRDVAIVTEIAGTTRDIMREHILLDDIPLHIIDTAGLRDSDDLVEKEGIKRAWQELKRADCVLLVVDINNPDQQNSLLNELRLTLPNKIPIITVYNKIDTTKLTAKCDEHTVYLSAKTGEGLDELKKVIKQVVGYQPTEGQFLARRRHLQALDEAKALLLTGQSQLTNHKAGELLAEDLRLAHQTLCEITGEFTSDDLLGKIFSSFCIGK.

(6S)-5-formyl-5,6,7,8-tetrahydrofolate contacts are provided by R22, E80, and K119. The TrmE-type G domain maps to 215-370 (GLSLVIAGRP…LKKVIKQVVG (156 aa)). N225 contributes to the K(+) binding site. GTP contacts are provided by residues 225 to 230 (NAGKST), 244 to 250 (TEIAGTT), and 269 to 272 (DTAG). Residue S229 participates in Mg(2+) binding. K(+) contacts are provided by T244, I246, and T249. Position 250 (T250) interacts with Mg(2+). K446 is a binding site for (6S)-5-formyl-5,6,7,8-tetrahydrofolate.

This sequence belongs to the TRAFAC class TrmE-Era-EngA-EngB-Septin-like GTPase superfamily. TrmE GTPase family. Homodimer. Heterotetramer of two MnmE and two MnmG subunits. It depends on K(+) as a cofactor.

It is found in the cytoplasm. Functionally, exhibits a very high intrinsic GTPase hydrolysis rate. Involved in the addition of a carboxymethylaminomethyl (cmnm) group at the wobble position (U34) of certain tRNAs, forming tRNA-cmnm(5)s(2)U34. This is tRNA modification GTPase MnmE from Legionella pneumophila subsp. pneumophila (strain Philadelphia 1 / ATCC 33152 / DSM 7513).